We begin with the raw amino-acid sequence, 435 residues long: Methionine aminopeptidase 2-2 (435 aa).

A disordered region spans residues 1-92 (MAAQTTEKLQ…VPVSNLFPNN (92 aa)). The span at 24–33 (DAPAAGQAEA) shows a compositional bias: low complexity. Over residues 34 to 45 (GEAEEDSDDEKD) the composition is skewed to acidic residues. Basic residues predominate over residues 59–73 (AKKKKRKSKKKKKGG). His-197 contributes to the substrate binding site. Residues Asp-217, Asp-228, and His-297 each contribute to the a divalent metal cation site. His-305 provides a ligand contact to substrate. Residues Glu-330 and Glu-425 each contribute to the a divalent metal cation site.

It belongs to the peptidase M24A family. Methionine aminopeptidase eukaryotic type 2 subfamily. Requires Co(2+) as cofactor. Zn(2+) serves as cofactor. Mn(2+) is required as a cofactor. The cofactor is Fe(2+).

It is found in the cytoplasm. It catalyses the reaction Release of N-terminal amino acids, preferentially methionine, from peptides and arylamides.. Cotranslationally removes the N-terminal methionine from nascent proteins. The N-terminal methionine is often cleaved when the second residue in the primary sequence is small and uncharged (Met-Ala-, Cys, Gly, Pro, Ser, Thr, or Val). The protein is Methionine aminopeptidase 2-2 of Aspergillus clavatus (strain ATCC 1007 / CBS 513.65 / DSM 816 / NCTC 3887 / NRRL 1 / QM 1276 / 107).